The sequence spans 476 residues: Ribulose bisphosphate carboxylase large chain (476 aa).

A propeptide spanning residues 1 to 2 (MS) is cleaved from the precursor. Pro3 bears the N-acetylproline mark. Lys14 is modified (N6,N6,N6-trimethyllysine). Substrate contacts are provided by Asn123 and Thr173. Residue Lys175 is the Proton acceptor of the active site. Residue Lys177 participates in substrate binding. Residues Lys201, Asp203, and Glu204 each contribute to the Mg(2+) site. Position 201 is an N6-carboxylysine (Lys201). The active-site Proton acceptor is His294. 3 residues coordinate substrate: Arg295, His327, and Ser379.

This sequence belongs to the RuBisCO large chain family. Type I subfamily. In terms of assembly, heterohexadecamer of 8 large chains and 8 small chains; disulfide-linked. The disulfide link is formed within the large subunit homodimers. The cofactor is Mg(2+). The disulfide bond which can form in the large chain dimeric partners within the hexadecamer appears to be associated with oxidative stress and protein turnover.

The protein localises to the plastid. It is found in the chloroplast. It carries out the reaction 2 (2R)-3-phosphoglycerate + 2 H(+) = D-ribulose 1,5-bisphosphate + CO2 + H2O. The enzyme catalyses D-ribulose 1,5-bisphosphate + O2 = 2-phosphoglycolate + (2R)-3-phosphoglycerate + 2 H(+). RuBisCO catalyzes two reactions: the carboxylation of D-ribulose 1,5-bisphosphate, the primary event in carbon dioxide fixation, as well as the oxidative fragmentation of the pentose substrate in the photorespiration process. Both reactions occur simultaneously and in competition at the same active site. The protein is Ribulose bisphosphate carboxylase large chain of Phaseolus vulgaris (Kidney bean).